We begin with the raw amino-acid sequence, 147 residues long: Prefoldin subunit alpha (147 aa).

This sequence belongs to the prefoldin alpha subunit family. As to quaternary structure, heterohexamer of two alpha and four beta subunits.

It is found in the cytoplasm. In terms of biological role, molecular chaperone capable of stabilizing a range of proteins. Seems to fulfill an ATP-independent, HSP70-like function in archaeal de novo protein folding. The protein is Prefoldin subunit alpha of Saccharolobus islandicus (strain M.16.27) (Sulfolobus islandicus).